A 20-amino-acid chain; its full sequence is Antimicrobial peptide EP-20 (20 aa).

Positions 1–20 (EGPVGLADPDGPASAPLGAP) are disordered.

It localises to the secreted. Functionally, the synthetic peptide inhibits growth of fungus P.capsici and partially that of V.dahliae, F.graminearum and F.omysporum. The protein is Antimicrobial peptide EP-20 of Xenorhabdus budapestensis.